A 200-amino-acid polypeptide reads, in one-letter code: MIALVQGRVAAIGLDAVVVVVGGVGMRVLATPATLAGLRVEADCELHTSLVVREDSLTLFGFADADERDVFELVQTVSGVGPRLALAMLAVHTPDGLRRAVAQEDLAALVRVPGIGRKGASRIVLELGDRLGPAQGAAPAAPVAVDDGADVVDALVGLGWPVRQAQDAVRGVLEDADGTAPDAAGLLRAALRSLAGDARG.

The domain I stretch occupies residues 1 to 63 (MIALVQGRVA…EDSLTLFGFA (63 aa)). The tract at residues 64–138 (DADERDVFEL…DRLGPAQGAA (75 aa)) is domain II. The interval 138 to 142 (APAAP) is flexible linker. The segment at 143-200 (VAVDDGADVVDALVGLGWPVRQAQDAVRGVLEDADGTAPDAAGLLRAALRSLAGDARG) is domain III.

This sequence belongs to the RuvA family. As to quaternary structure, homotetramer. Forms an RuvA(8)-RuvB(12)-Holliday junction (HJ) complex. HJ DNA is sandwiched between 2 RuvA tetramers; dsDNA enters through RuvA and exits via RuvB. An RuvB hexamer assembles on each DNA strand where it exits the tetramer. Each RuvB hexamer is contacted by two RuvA subunits (via domain III) on 2 adjacent RuvB subunits; this complex drives branch migration. In the full resolvosome a probable DNA-RuvA(4)-RuvB(12)-RuvC(2) complex forms which resolves the HJ.

The protein localises to the cytoplasm. In terms of biological role, the RuvA-RuvB-RuvC complex processes Holliday junction (HJ) DNA during genetic recombination and DNA repair, while the RuvA-RuvB complex plays an important role in the rescue of blocked DNA replication forks via replication fork reversal (RFR). RuvA specifically binds to HJ cruciform DNA, conferring on it an open structure. The RuvB hexamer acts as an ATP-dependent pump, pulling dsDNA into and through the RuvAB complex. HJ branch migration allows RuvC to scan DNA until it finds its consensus sequence, where it cleaves and resolves the cruciform DNA. The sequence is that of Holliday junction branch migration complex subunit RuvA from Beutenbergia cavernae (strain ATCC BAA-8 / DSM 12333 / CCUG 43141 / JCM 11478 / NBRC 16432 / NCIMB 13614 / HKI 0122).